The chain runs to 842 residues: Pentatricopeptide repeat-containing protein At3g22690 (842 aa).

PPR repeat units lie at residues 98-132 (TCFM…GISP), 133-167 (DKYT…GYAK), 168-202 (DLFV…NVVS), 203-234 (WTSM…EVTP), 235-269 (NSVT…GIEV), 270-300 (NDLM…YGAS), 301-335 (NLDL…GVRP), 336-370 (DRIS…GFES), 371-401 (WDNI…MSNK), 402-436 (TVVT…NIVS), 437-463 (WNTI…MQSQ), 469-503 (DGVT…GIQL), 504-534 (DVRL…LTNR), 535-569 (DVSA…GLKP), 570-605 (DGVA…GVSP), and 606-636 (EDVH…MPME). Residues 641-716 (IWNSLLAACR…PPGTSSIQIR (76 aa)) form a type E motif region. Positions 717-747 (GKTHEFTSGDESHPEMPNIEAMLDEVSQRAS) are type E(+) motif. The tract at residues 748 to 842 (HLGHVPDLSN…QGKCSCGDFW (95 aa)) is type DYW motif.

The protein belongs to the PPR family. PCMP-H subfamily.

In Arabidopsis thaliana (Mouse-ear cress), this protein is Pentatricopeptide repeat-containing protein At3g22690 (PCMP-H56).